The chain runs to 290 residues: Fat storage-inducing transmembrane protein 1 (290 aa).

5 consecutive transmembrane segments (helical) span residues methionine 1 to threonine 21, histidine 26 to serine 46, serine 65 to valine 85, leucine 173 to leucine 193, and isoleucine 205 to leucine 225.

The protein belongs to the FIT family. FIT1 subfamily.

It localises to the endoplasmic reticulum membrane. Its function is as follows. May play an important role in the formation of lipid droplets (LDs) which are storage organelles at the center of lipid and energy homeostasis. May directly bind to diacylglycerol (DAGs) and triacylglycerol. This is Fat storage-inducing transmembrane protein 1 (fitm1l) from Danio rerio (Zebrafish).